The primary structure comprises 453 residues: Putative long chain fatty acid-CoA ligase VraA (453 aa).

Belongs to the ATP-dependent AMP-binding enzyme family.

The polypeptide is Putative long chain fatty acid-CoA ligase VraA (vraA) (Staphylococcus epidermidis (strain ATCC 35984 / DSM 28319 / BCRC 17069 / CCUG 31568 / BM 3577 / RP62A)).